The primary structure comprises 276 residues: Mitochondrial outer membrane protein porin of 36 kDa (276 aa).

This sequence belongs to the eukaryotic mitochondrial porin (TC 1.B.8.1) family.

The protein localises to the mitochondrion outer membrane. Its function is as follows. Forms a channel through the cell membrane that allows diffusion of small hydrophilic molecules. The channel adopts an open conformation at low or zero membrane potential and a closed conformation at potentials above 30-40 mV. The open state has a weak anion selectivity whereas the closed state is cation-selective. The polypeptide is Mitochondrial outer membrane protein porin of 36 kDa (Solanum tuberosum (Potato)).